The following is a 142-amino-acid chain: Small ribosomal subunit protein uS12 (142 aa).

The protein belongs to the universal ribosomal protein uS12 family. In terms of assembly, part of the 30S ribosomal subunit.

With S4 and S5 plays an important role in translational accuracy. Located at the interface of the 30S and 50S subunits. The protein is Small ribosomal subunit protein uS12 of Methanosarcina barkeri (strain Fusaro / DSM 804).